The chain runs to 497 residues: DNA-dependent metalloprotease SPRTN (497 aa).

Methionine 1 bears the N-acetylmethionine mark. The 168-residue stretch at 46 to 213 (LQALFLQFND…KTCGGTYIKI (168 aa)) folds into the SprT-like domain. Histidine 112 contacts Zn(2+). Residue glutamate 113 is part of the active site. Zn(2+) is bound by residues histidine 116 and histidine 131. Lysine 231 is modified (N6-acetyllysine). The SHP-box motif lies at 254–262 (FSGKGYVLG). Phosphoserine is present on serine 269. Residue lysine 304 forms a Glycyl lysine isopeptide (Lys-Gly) (interchain with G-Cter in SUMO2) linkage. Residues 326-333 (QSVLSSYF) carry the PIP-box motif. A Glycyl lysine isopeptide (Lys-Gly) (interchain with G-Cter in SUMO2); alternate cross-link involves residue lysine 342. Lysine 342 participates in a covalent cross-link: Glycyl lysine isopeptide (Lys-Gly) (interchain with G-Cter in ubiquitin); alternate. Residues 344 to 459 (FRNVNGSPVK…ASAPQSLSSQ (116 aa)) are disordered. The span at 347-356 (VNGSPVKNGT) shows a compositional bias: polar residues. Lysine 362 is covalently cross-linked (Glycyl lysine isopeptide (Lys-Gly) (interchain with G-Cter in SUMO2)). Residues 383–404 (TSKVTAPASATVTSAAGTSATI) show a composition bias toward low complexity. At serine 384 the chain carries Phosphoserine. The short motif at 413 to 424 (DQFLNKRPRLED) is the Nuclear localization signal element. Over residues 420–432 (PRLEDRTALDTIK) the composition is skewed to basic and acidic residues. Lysine 432 participates in a covalent cross-link: Glycyl lysine isopeptide (Lys-Gly) (interchain with G-Cter in SUMO2). Residues 442-459 (RSSSQPTAASAPQSLSSQ) show a composition bias toward low complexity. A UBZ4-type zinc finger spans residues 462 to 489 (LVNCPVCQGVVVESQINEHLDRCLEGNK). Zn(2+) is bound by residues cysteine 465, cysteine 468, histidine 480, and cysteine 484.

Belongs to the Spartan family. As to quaternary structure, homodimer. Interacts (VIA PIP-box) with PCNA (when ubiquitinated). Interacts (via its SHP-box) with VCP/p97. Interacts with RAD18. Interacts with KCTD13 and POLD3. Zn(2+) is required as a cofactor. Autocatalytically cleaved in response to double-stranded DNA-binding: autocatalytic cleavage takes place in trans and leads to inactivation. Post-translationally, monoubiquitinated; monoubiquitination promotes exclusion from chromatin. Deubiquitinated by VCPIP1: deubiquitination is required for subsequent acetylation and recruitment to chromatin and DNA damage sites. In terms of processing, acetylated following deubiquitination by VCPIP1, leading to recruitment to chromatin and DNA damage sites. Phosphorylation by CHEK1 promotes recruitment to chromatin.

The protein resides in the nucleus. Its subcellular location is the chromosome. With respect to regulation, DNA-binding activates the protease activity: single-stranded DNA-binding specifically activates ability to cleave covalent DNA-protein cross-links (DPCs). In contrast, double-stranded DNA-binding specifically activates autocatalytic cleavage, and subsequent inactivation. Its function is as follows. DNA-dependent metalloendopeptidase that mediates the proteolytic cleavage of covalent DNA-protein cross-links (DPCs) during DNA synthesis, thereby playing a key role in maintaining genomic integrity. DPCs are highly toxic DNA lesions that interfere with essential chromatin transactions, such as replication and transcription, and which are induced by reactive agents, such as UV light or formaldehyde. Associates with the DNA replication machinery and specifically removes DPCs during DNA synthesis. Catalyzes proteolytic cleavage of the HMCES DNA-protein cross-link following unfolding by the BRIP1/FANCJ helicase. Acts as a pleiotropic protease for DNA-binding proteins cross-linked with DNA, such as TOP1, TOP2A, histones H3 and H4. Mediates degradation of DPCs that are not ubiquitinated, while it is not able to degrade ubiquitinated DPCs. SPRTN activation requires polymerase collision with DPCs followed by helicase bypass of DPCs. Involved in recruitment of VCP/p97 to sites of DNA damage. Also acts as an activator of CHEK1 during normal DNA replication by mediating proteolytic cleavage of CHEK1, thereby promoting CHEK1 removal from chromatin and subsequent activation. Does not activate CHEK1 in response to DNA damage. May also act as a 'reader' of ubiquitinated PCNA: recruited to sites of UV damage and interacts with ubiquitinated PCNA and RAD18, the E3 ubiquitin ligase that monoubiquitinates PCNA. Facilitates chromatin association of RAD18 and is required for efficient PCNA monoubiquitination, promoting a feed-forward loop to enhance PCNA ubiquitination and translesion DNA synthesis. The sequence is that of DNA-dependent metalloprotease SPRTN from Mus musculus (Mouse).